The following is a 256-amino-acid chain: 1-(5-phosphoribosyl)-5-[(5-phosphoribosylamino)methylideneamino] imidazole-4-carboxamide isomerase (256 aa).

The active-site Proton acceptor is Asp8. Asp129 functions as the Proton donor in the catalytic mechanism.

The protein belongs to the HisA/HisF family.

It localises to the cytoplasm. It carries out the reaction 1-(5-phospho-beta-D-ribosyl)-5-[(5-phospho-beta-D-ribosylamino)methylideneamino]imidazole-4-carboxamide = 5-[(5-phospho-1-deoxy-D-ribulos-1-ylimino)methylamino]-1-(5-phospho-beta-D-ribosyl)imidazole-4-carboxamide. It participates in amino-acid biosynthesis; L-histidine biosynthesis; L-histidine from 5-phospho-alpha-D-ribose 1-diphosphate: step 4/9. The sequence is that of 1-(5-phosphoribosyl)-5-[(5-phosphoribosylamino)methylideneamino] imidazole-4-carboxamide isomerase from Synechococcus sp. (strain WH7803).